The primary structure comprises 302 residues: MCSDKNITATALVRPSWLRVKAPFSDEYQSTNELIKSLKLNTVCKEAACPNIGECWSKKHATVMILGSICTRACAFCNVSTGKPEQVDEYEPYRLSEAVMKLGLKHVVITSVDRDDISDGGASHFAKCITYIRERSPSTSIEVLTPDFLRKHDAWKIVAKARPDVYNHNIETVPSLYLKVRPGARYYNSLNLLHQVKIFDSSIFTKSGIMVGLGETKHEVLQVMDDLRAAEVDFLTIGQYLRPSARHIDVDRYVAPDEFDYYARVAKSKGFLMVSASPLTRSSYHAGEHFEKLKQMRLQNII.

The [4Fe-4S] cluster site is built by C44, C49, C55, C70, C74, C77, and S283. The Radical SAM core domain maps to 56–272 (WSKKHATVMI…ARVAKSKGFL (217 aa)).

This sequence belongs to the radical SAM superfamily. Lipoyl synthase family. The cofactor is [4Fe-4S] cluster.

It localises to the cytoplasm. It catalyses the reaction [[Fe-S] cluster scaffold protein carrying a second [4Fe-4S](2+) cluster] + N(6)-octanoyl-L-lysyl-[protein] + 2 oxidized [2Fe-2S]-[ferredoxin] + 2 S-adenosyl-L-methionine + 4 H(+) = [[Fe-S] cluster scaffold protein] + N(6)-[(R)-dihydrolipoyl]-L-lysyl-[protein] + 4 Fe(3+) + 2 hydrogen sulfide + 2 5'-deoxyadenosine + 2 L-methionine + 2 reduced [2Fe-2S]-[ferredoxin]. It participates in protein modification; protein lipoylation via endogenous pathway; protein N(6)-(lipoyl)lysine from octanoyl-[acyl-carrier-protein]: step 2/2. Catalyzes the radical-mediated insertion of two sulfur atoms into the C-6 and C-8 positions of the octanoyl moiety bound to the lipoyl domains of lipoate-dependent enzymes, thereby converting the octanoylated domains into lipoylated derivatives. The polypeptide is Lipoyl synthase (Orientia tsutsugamushi (strain Ikeda) (Rickettsia tsutsugamushi)).